Reading from the N-terminus, the 226-residue chain is Ethylene-responsive transcription factor-like protein At4g13040 (226 aa).

Disordered regions lie at residues 63–109 (EERS…RKRV) and 195–226 (KKPKSRIEHEDTKINASMPHQPEEEEQDSDKM). A compositionally biased stretch (basic residues) spans 97–109 (PPKRRKQHRRKRV). Positions 105-171 (RRKRVHNQEP…REPNFELSEE (67 aa)) form a DNA-binding region, AP2/ERF. The span at 217–226 (EEEEQDSDKM) shows a compositional bias: acidic residues.

This sequence belongs to the AP2/ERF transcription factor family.

It localises to the nucleus. Its function is as follows. Probably acts as a transcriptional activator. Binds to the GCC-box pathogenesis-related promoter element. May be involved in the regulation of gene expression by stress factors and by components of stress signal transduction pathways. The sequence is that of Ethylene-responsive transcription factor-like protein At4g13040 from Arabidopsis thaliana (Mouse-ear cress).